Consider the following 326-residue polypeptide: N-acetyl-gamma-glutamyl-phosphate reductase (326 aa).

Cys-155 is a catalytic residue.

This sequence belongs to the NAGSA dehydrogenase family. Type 1 subfamily.

Its subcellular location is the cytoplasm. It catalyses the reaction N-acetyl-L-glutamate 5-semialdehyde + phosphate + NADP(+) = N-acetyl-L-glutamyl 5-phosphate + NADPH + H(+). It functions in the pathway amino-acid biosynthesis; L-arginine biosynthesis; N(2)-acetyl-L-ornithine from L-glutamate: step 3/4. Functionally, catalyzes the NADPH-dependent reduction of N-acetyl-5-glutamyl phosphate to yield N-acetyl-L-glutamate 5-semialdehyde. The protein is N-acetyl-gamma-glutamyl-phosphate reductase of Shewanella woodyi (strain ATCC 51908 / MS32).